We begin with the raw amino-acid sequence, 174 residues long: 2-C-methyl-D-erythritol 2,4-cyclodiphosphate synthase (174 aa).

Residues D13, H15, and H61 each coordinate a divalent metal cation. Residue 13–15 (DAH) coordinates 4-CDP-2-C-methyl-D-erythritol 2-phosphate. 4-CDP-2-C-methyl-D-erythritol 2-phosphate is bound by residues 75-77 (DIG), 149-152 (TTTD), F156, and H159.

It belongs to the IspF family. Homotrimer. Requires a divalent metal cation as cofactor.

The enzyme catalyses 4-CDP-2-C-methyl-D-erythritol 2-phosphate = 2-C-methyl-D-erythritol 2,4-cyclic diphosphate + CMP. The protein operates within isoprenoid biosynthesis; isopentenyl diphosphate biosynthesis via DXP pathway; isopentenyl diphosphate from 1-deoxy-D-xylulose 5-phosphate: step 4/6. Involved in the biosynthesis of isopentenyl diphosphate (IPP) and dimethylallyl diphosphate (DMAPP), two major building blocks of isoprenoid compounds. Catalyzes the conversion of 4-diphosphocytidyl-2-C-methyl-D-erythritol 2-phosphate (CDP-ME2P) to 2-C-methyl-D-erythritol 2,4-cyclodiphosphate (ME-CPP) with a corresponding release of cytidine 5-monophosphate (CMP). In Bifidobacterium longum (strain NCC 2705), this protein is 2-C-methyl-D-erythritol 2,4-cyclodiphosphate synthase.